A 393-amino-acid polypeptide reads, in one-letter code: Elongation factor Tu (393 aa).

One can recognise a tr-type G domain in the interval 10–203 (KPHVNIGTIG…AVDSFIPDPV (194 aa)). The interval 19–26 (GHVDHGKT) is G1. Residue 19–26 (GHVDHGKT) coordinates GTP. Mg(2+) is bound at residue threonine 26. The interval 60-64 (GITIS) is G2. A G3 region spans residues 81–84 (DCPG). Residues 81 to 85 (DCPGH) and 136 to 139 (NKVD) each bind GTP. A G4 region spans residues 136-139 (NKVD). The segment at 173–175 (SAL) is G5.

It belongs to the TRAFAC class translation factor GTPase superfamily. Classic translation factor GTPase family. EF-Tu/EF-1A subfamily. As to quaternary structure, monomer.

Its subcellular location is the cytoplasm. The catalysed reaction is GTP + H2O = GDP + phosphate + H(+). Functionally, GTP hydrolase that promotes the GTP-dependent binding of aminoacyl-tRNA to the A-site of ribosomes during protein biosynthesis. This is Elongation factor Tu from Pelodictyon phaeoclathratiforme (strain DSM 5477 / BU-1).